The sequence spans 199 residues: Protein MM_0484 (199 aa).

The 192-residue stretch at 5–196 (TEGRAAVKLA…EKEPDGEVIE (192 aa)) folds into the AMMECR1 domain.

This is Protein MM_0484 from Methanosarcina mazei (strain ATCC BAA-159 / DSM 3647 / Goe1 / Go1 / JCM 11833 / OCM 88) (Methanosarcina frisia).